The following is a 1547-amino-acid chain: Transposon Ty3-G Gag-Pol polyprotein (1547 aa).

Ser-2 is subject to N-acetylserine. The segment at Arg-265–Ala-282 adopts a CCHC-type zinc-finger fold. The active-site For protease activity; shared with dimeric partner is Asp-336. The 178-residue stretch at Leu-620–Ile-797 folds into the Reverse transcriptase domain. Mg(2+) is bound by residues Asp-686, Asp-748, Asp-749, Asp-893, Glu-936, and Asp-961. One can recognise an RNase H Ty3/gyspy-type domain in the interval Asp-893–Tyr-1011. The segment at His-1106–Cys-1145 is integrase-type zinc finger-like. Residues Leu-1159 to Leu-1324 form the Integrase catalytic domain. Residues Asp-1175 and Asp-1236 each coordinate Mg(2+).

In terms of assembly, the protease is a homodimer, whose active site consists of two apposed aspartic acid residues. Initially, virus-like particles (VLPs) are composed of the structural unprocessed proteins Gag and Gag-Pol, and also contain the host initiator methionine tRNA (tRNA(i)-Met) which serves as a primer for minus-strand DNA synthesis, and a dimer of genomic Ty RNA. Processing of the polyproteins occurs within the particle and proceeds by an ordered pathway, called maturation. First, the protease (PR) is released by autocatalytic cleavage of the Gag-Pol polyprotein, and this cleavage is a prerequisite for subsequent processing at the remaining sites to release the mature structural and catalytic proteins. Maturation takes place prior to the RT reaction and is required to produce transposition-competent VLPs.

Its subcellular location is the cytoplasm. The protein resides in the nucleus. The catalysed reaction is DNA(n) + a 2'-deoxyribonucleoside 5'-triphosphate = DNA(n+1) + diphosphate. It catalyses the reaction Endonucleolytic cleavage to 5'-phosphomonoester.. In terms of biological role, capsid protein (CA) is the structural component of the virus-like particle (VLP), forming the shell that encapsulates the genomic RNA-nucleocapsid complex. Nucleocapsid protein p11 (NC) forms the nucleocore that coats the retro-elements dimeric RNA. Binds these RNAs through its zinc fingers. Promotes primer tRNA(i)-Met annealing to the multipartite primer-binding site (PBS), dimerization of Ty3 RNA and initiation of reverse transcription. Functionally, the aspartyl protease (PR) mediates the proteolytic cleavages of the Gag and Gag-Pol polyproteins after assembly of the VLP. Its function is as follows. Reverse transcriptase/ribonuclease H (RT) is a multifunctional enzyme that catalyzes the conversion of the retro-elements RNA genome into dsDNA within the VLP. The enzyme displays a DNA polymerase activity that can copy either DNA or RNA templates, and a ribonuclease H (RNase H) activity that cleaves the RNA strand of RNA-DNA heteroduplexes during plus-strand synthesis and hydrolyzes RNA primers. The conversion leads to a linear dsDNA copy of the retrotransposon that includes long terminal repeats (LTRs) at both ends. In terms of biological role, integrase (IN) targets the VLP to the nucleus, where a subparticle preintegration complex (PIC) containing at least integrase and the newly synthesized dsDNA copy of the retrotransposon must transit the nuclear membrane. Once in the nucleus, integrase performs the integration of the dsDNA into the host genome. The chain is Transposon Ty3-G Gag-Pol polyprotein (TY3B-G) from Saccharomyces cerevisiae (strain ATCC 204508 / S288c) (Baker's yeast).